We begin with the raw amino-acid sequence, 209 residues long: Glycine cleavage system H-like protein gcvH4 (209 aa).

Residues 35 to 51 are compositionally biased toward low complexity; it reads NNNNNNNNNNNNNNNNN. The segment at 35-56 is disordered; that stretch reads NNNNNNNNNNNNNNNNNRNKKL. Positions 73 to 159 constitute a Lipoyl-binding domain; the sequence is FATIGITNYV…KTTTTTTKIK (87 aa).

This sequence belongs to the GcvH family.

The protein is Glycine cleavage system H-like protein gcvH4 (gcvH4) of Dictyostelium discoideum (Social amoeba).